Here is a 179-residue protein sequence, read N- to C-terminus: Ubiquitin-conjugating enzyme E2 C (179 aa).

Residues M1–V31 form a disordered region. An N-acetylalanine modification is found at A2. A Phosphoserine modification is found at S3. In terms of domain architecture, UBC core spans P30 to T175. The active-site Glycyl thioester intermediate is C114.

The protein belongs to the ubiquitin-conjugating enzyme family. In terms of assembly, component of the APC/C complex, composed of at least 14 distinct subunits that assemble into a complex of at least 19 chains with a combined molecular mass of around 1.2 MDa. Within this complex, directly interacts with ANAPC2. In terms of processing, autoubiquitinated by the APC/C complex, leading to its degradation by the proteasome. Its degradation plays a central role in APC/C regulation, allowing cyclin-A accumulation before S phase entry. APC/C substrates inhibit the autoubiquitination of UBE2C/UBCH10 but not its E2 function, hence APC/C remaining active until its substrates have been destroyed.

The catalysed reaction is S-ubiquitinyl-[E1 ubiquitin-activating enzyme]-L-cysteine + [E2 ubiquitin-conjugating enzyme]-L-cysteine = [E1 ubiquitin-activating enzyme]-L-cysteine + S-ubiquitinyl-[E2 ubiquitin-conjugating enzyme]-L-cysteine.. It catalyses the reaction S-ubiquitinyl-[E1 ubiquitin-activating enzyme]-L-cysteine + [acceptor protein]-L-lysine = [E1 ubiquitin-activating enzyme]-L-cysteine + N(6)-monoubiquitinyl-[acceptor protein]-L-lysine.. The protein operates within protein modification; protein ubiquitination. In terms of biological role, accepts ubiquitin from the E1 complex and catalyzes its covalent attachment to other proteins. In vitro catalyzes 'Lys-11'- and 'Lys-48'-linked polyubiquitination. Acts as an essential factor of the anaphase promoting complex/cyclosome (APC/C), a cell cycle-regulated ubiquitin ligase that controls progression through mitosis. Acts by initiating 'Lys-11'-linked polyubiquitin chains on APC/C substrates, leading to the degradation of APC/C substrates by the proteasome and promoting mitotic exit. This Homo sapiens (Human) protein is Ubiquitin-conjugating enzyme E2 C (UBE2C).